The primary structure comprises 347 residues: Holliday junction branch migration complex subunit RuvB (347 aa).

The large ATPase domain (RuvB-L) stretch occupies residues 1–183; sequence MTDVPRMVTP…FGIPVRLNFY (183 aa). ATP contacts are provided by residues Leu22, Arg23, Gly64, Lys67, Thr68, Thr69, 130 to 132, Arg173, Tyr183, and Arg220; that span reads EDF. Thr68 serves as a coordination point for Mg(2+). Residues 184–254 are small ATPAse domain (RuvB-S); the sequence is TVDELEKIVS…IADHALGALE (71 aa). The interval 257–347 is head domain (RuvB-H); the sequence is AAGLDAMDRR…QFGLFGGEDE (91 aa). Residues Arg293, Arg312, and Arg317 each contribute to the DNA site.

Belongs to the RuvB family. As to quaternary structure, homohexamer. Forms an RuvA(8)-RuvB(12)-Holliday junction (HJ) complex. HJ DNA is sandwiched between 2 RuvA tetramers; dsDNA enters through RuvA and exits via RuvB. An RuvB hexamer assembles on each DNA strand where it exits the tetramer. Each RuvB hexamer is contacted by two RuvA subunits (via domain III) on 2 adjacent RuvB subunits; this complex drives branch migration. In the full resolvosome a probable DNA-RuvA(4)-RuvB(12)-RuvC(2) complex forms which resolves the HJ.

Its subcellular location is the cytoplasm. It carries out the reaction ATP + H2O = ADP + phosphate + H(+). Functionally, the RuvA-RuvB-RuvC complex processes Holliday junction (HJ) DNA during genetic recombination and DNA repair, while the RuvA-RuvB complex plays an important role in the rescue of blocked DNA replication forks via replication fork reversal (RFR). RuvA specifically binds to HJ cruciform DNA, conferring on it an open structure. The RuvB hexamer acts as an ATP-dependent pump, pulling dsDNA into and through the RuvAB complex. RuvB forms 2 homohexamers on either side of HJ DNA bound by 1 or 2 RuvA tetramers; 4 subunits per hexamer contact DNA at a time. Coordinated motions by a converter formed by DNA-disengaged RuvB subunits stimulates ATP hydrolysis and nucleotide exchange. Immobilization of the converter enables RuvB to convert the ATP-contained energy into a lever motion, pulling 2 nucleotides of DNA out of the RuvA tetramer per ATP hydrolyzed, thus driving DNA branch migration. The RuvB motors rotate together with the DNA substrate, which together with the progressing nucleotide cycle form the mechanistic basis for DNA recombination by continuous HJ branch migration. Branch migration allows RuvC to scan DNA until it finds its consensus sequence, where it cleaves and resolves cruciform DNA. The sequence is that of Holliday junction branch migration complex subunit RuvB from Nitrobacter hamburgensis (strain DSM 10229 / NCIMB 13809 / X14).